A 463-amino-acid polypeptide reads, in one-letter code: L-seryl-tRNA(Sec) selenium transferase (463 aa).

Position 295 is an N6-(pyridoxal phosphate)lysine (Lys295).

It belongs to the SelA family. As to quaternary structure, homodecamer; pentamer of dimers. Binds only one seryl-tRNA(Sec) per dimer. It depends on pyridoxal 5'-phosphate as a cofactor.

It localises to the cytoplasm. The enzyme catalyses L-seryl-tRNA(Sec) + selenophosphate + H(+) = L-selenocysteinyl-tRNA(Sec) + phosphate. It participates in aminoacyl-tRNA biosynthesis; selenocysteinyl-tRNA(Sec) biosynthesis; selenocysteinyl-tRNA(Sec) from L-seryl-tRNA(Sec) (bacterial route): step 1/1. In terms of biological role, converts seryl-tRNA(Sec) to selenocysteinyl-tRNA(Sec) required for selenoprotein biosynthesis. The protein is L-seryl-tRNA(Sec) selenium transferase of Escherichia coli O127:H6 (strain E2348/69 / EPEC).